A 175-amino-acid polypeptide reads, in one-letter code: Bifunctional protein PyrR (175 aa).

A PRPP-binding motif is present at residues 97 to 109; that stretch reads IVLIDDVLFTGRT.

The protein belongs to the purine/pyrimidine phosphoribosyltransferase family. PyrR subfamily. Homodimer and homohexamer; in equilibrium.

The enzyme catalyses UMP + diphosphate = 5-phospho-alpha-D-ribose 1-diphosphate + uracil. In terms of biological role, regulates transcriptional attenuation of the pyrimidine nucleotide (pyr) operon by binding in a uridine-dependent manner to specific sites on pyr mRNA. This disrupts an antiterminator hairpin in the RNA and favors formation of a downstream transcription terminator, leading to a reduced expression of downstream genes. Also displays a weak uracil phosphoribosyltransferase activity which is not physiologically significant. In Leuconostoc mesenteroides subsp. mesenteroides (strain ATCC 8293 / DSM 20343 / BCRC 11652 / CCM 1803 / JCM 6124 / NCDO 523 / NBRC 100496 / NCIMB 8023 / NCTC 12954 / NRRL B-1118 / 37Y), this protein is Bifunctional protein PyrR.